We begin with the raw amino-acid sequence, 605 residues long: DNA mismatch repair protein MutL (605 aa).

Belongs to the DNA mismatch repair MutL/HexB family.

Its function is as follows. This protein is involved in the repair of mismatches in DNA. It is required for dam-dependent methyl-directed DNA mismatch repair. May act as a 'molecular matchmaker', a protein that promotes the formation of a stable complex between two or more DNA-binding proteins in an ATP-dependent manner without itself being part of a final effector complex. This is DNA mismatch repair protein MutL from Rhizobium meliloti (strain 1021) (Ensifer meliloti).